The chain runs to 241 residues: Pyridoxine 5'-phosphate synthase (241 aa).

Asn10 provides a ligand contact to 3-amino-2-oxopropyl phosphate. 12–13 (DH) contributes to the 1-deoxy-D-xylulose 5-phosphate binding site. Residue Arg21 participates in 3-amino-2-oxopropyl phosphate binding. His48 serves as the catalytic Proton acceptor. 2 residues coordinate 1-deoxy-D-xylulose 5-phosphate: Arg50 and His55. Glu75 acts as the Proton acceptor in catalysis. Residue Thr105 participates in 1-deoxy-D-xylulose 5-phosphate binding. His195 functions as the Proton donor in the catalytic mechanism. Residues Gly196 and 217–218 (GH) each bind 3-amino-2-oxopropyl phosphate.

It belongs to the PNP synthase family. Homooctamer; tetramer of dimers.

The protein resides in the cytoplasm. The catalysed reaction is 3-amino-2-oxopropyl phosphate + 1-deoxy-D-xylulose 5-phosphate = pyridoxine 5'-phosphate + phosphate + 2 H2O + H(+). The protein operates within cofactor biosynthesis; pyridoxine 5'-phosphate biosynthesis; pyridoxine 5'-phosphate from D-erythrose 4-phosphate: step 5/5. Functionally, catalyzes the complicated ring closure reaction between the two acyclic compounds 1-deoxy-D-xylulose-5-phosphate (DXP) and 3-amino-2-oxopropyl phosphate (1-amino-acetone-3-phosphate or AAP) to form pyridoxine 5'-phosphate (PNP) and inorganic phosphate. The chain is Pyridoxine 5'-phosphate synthase from Bdellovibrio bacteriovorus (strain ATCC 15356 / DSM 50701 / NCIMB 9529 / HD100).